The primary structure comprises 170 residues: Flavin reductase (NADPH) (170 aa).

This sequence belongs to the non-flavoprotein flavin reductase family.

It carries out the reaction reduced riboflavin + NADP(+) = riboflavin + NADPH + 2 H(+). Catalyzes the NADH-dependent reduction of FAD to provide FADH2 for the halogenase RebH. In Lentzea aerocolonigenes (Lechevalieria aerocolonigenes), this protein is Flavin reductase (NADPH) (rbmH).